The primary structure comprises 1256 residues: Octopamine receptor beta-3R (1256 aa).

Residues 1–143 (MSGVNVADLL…LDLSLLLLKG (143 aa)) lie on the Extracellular side of the membrane. Asparagine 36, asparagine 113, and asparagine 117 each carry an N-linked (GlcNAc...) asparagine glycan. A helical transmembrane segment spans residues 144–164 (FIFSSIILAAVLGNALVIISV). The Cytoplasmic segment spans residues 165 to 171 (QRNRKLR). Residues 172–192 (VITNYFVVSLAMADMLVALCA) traverse the membrane as a helical segment. Residues 193–213 (MTFNASVELSGGKWMFGPFMC) lie on the Extracellular side of the membrane. N-linked (GlcNAc...) asparagine glycosylation is present at asparagine 196. A helical transmembrane segment spans residues 214–236 (NVYNSLDVYFSTASILHLCCISV). Residues 237-258 (DRYYAIVRPLEYPLNMTHKTVC) are Cytoplasmic-facing. A helical transmembrane segment spans residues 259 to 279 (FMLANVWILPALISFTPIFLG). Residues 280–305 (WYTTEEHLREISLHPDQCSFVVNKAY) lie on the Extracellular side of the membrane. The chain crosses the membrane as a helical span at residues 306-326 (ALISSSVSFWIPGIVMLVMYW). Over 327–1169 (RIFKEAIRQR…WKAEHKAART (843 aa)) the chain is Cytoplasmic. Disordered regions lie at residues 377–427 (AREE…DLRD), 480–512 (ELDK…ESTA), 665–698 (LSHS…NKPD), 751–774 (GESP…EPSG), and 1087–1117 (DTTV…SSTR). Residues 396 to 406 (TDEDDDRDECD) show a composition bias toward acidic residues. A compositionally biased stretch (polar residues) spans 489-498 (NGPQQQLSLT). Residues 757–770 (PATPPPSLSPPELP) show a composition bias toward pro residues. The helical transmembrane segment at 1170 to 1190 (LGIIMGVFLLCWLPFFLWYVI) threads the bilayer. Residues 1191 to 1202 (TSLCGPACPCPD) are Extracellular-facing. A helical membrane pass occupies residues 1203–1223 (VLVVVLFWIGYFNSTLNPLIY). Topologically, residues 1224 to 1256 (AYFNRDFREAFRNTLECVLPCLEKRNPYNAYYV) are cytoplasmic.

Belongs to the G-protein coupled receptor 1 family. In the adult, expressed in the inferior and superior protocerebrum, the posterior lateral protocerebrum, the deutocerebrum, the surface of the subesophageal ganglion, the lateral cell body region, the cortical layer of the ventral nerve cord and the optic lobe medulla of the central nervous system (CNS). Also expressed in the nurse cells and follicle cells of the egg chambers in the ovary at oogenic stages 1-10, and spermatogonia and spermatocytes in the testis. Expressed ubiquitously in the embryonic CNS. In larvae, expressed in the ventral cortical layer of the ventral nerve cord, the cortical layer of the brain lobes, salivary glands, midgut, imaginal disks and developing reproductive organs. Expressed in the larval prothoracic gland with weak expression in other regions of the ring gland.

The protein resides in the cell membrane. In terms of biological role, autoreceptor for octopamine, which is a neurotransmitter, neurohormone, and neuromodulator in invertebrates. Probably also acts as a receptor for tyramine during ecdysone biosynthesis. Required for the biosynthesis of the steroid hormone ecdysone which is necessary for metamorphosis. Involved in activation of prothoracicotropic hormone and insulin-like peptide signaling which is required for the expression of ecdysone biosynthetic genes. In Drosophila melanogaster (Fruit fly), this protein is Octopamine receptor beta-3R.